The chain runs to 61 residues: Sec-independent protein translocase protein TatA (61 aa).

The chain crosses the membrane as a helical span at residues 1–21 (MFSNIGFPGLILILVAVLILF).

Belongs to the TatA/E family. Forms a complex with TatC.

It localises to the cell membrane. Its function is as follows. Part of the twin-arginine translocation (Tat) system that transports large folded proteins containing a characteristic twin-arginine motif in their signal peptide across membranes. TatA could form the protein-conducting channel of the Tat system. In Bacillus anthracis (strain A0248), this protein is Sec-independent protein translocase protein TatA.